A 162-amino-acid polypeptide reads, in one-letter code: Caveolin-2 (162 aa).

Residues 1 to 86 are Cytoplasmic-facing; sequence MGLETEKADV…FEISKYVMYK (86 aa). A Phosphotyrosine; by SRC modification is found at Tyr-19. 2 positions are modified to phosphoserine: Ser-20 and Ser-23. A Phosphotyrosine; by SRC modification is found at Tyr-27. Phosphoserine is present on Ser-36. Positions 87–107 form an intramembrane region, helical; that stretch reads FLTVFLSIPLAFLAGILFATL. Residues 108 to 162 are Cytoplasmic-facing; it reads SCLHIWIIMPFVKTCLMVLPSVQTIWKSVTDAIIAPLCTSIGRSFSSVSLQLSHD.

It belongs to the caveolin family. As to quaternary structure, monomer or homodimer. Interacts with CAV1; the interaction forms a stable heterooligomeric complex that is required for targeting to lipid rafts and for caveolae formation. Tyrosine phosphorylated forms do not form heterooligomers with the Tyr-19-phosphorylated form existing as a monomer or dimer, and the Tyr-27-form as a monomer only. Interacts (tyrosine phosphorylated form) with the SH2 domain-containing proteins, RASA1, NCK1 and SRC. Interacts (tyrosine phosphorylated form) with INSR, the interaction (Tyr-27-phosphorylated form) is increased on insulin stimulation. Interacts (Tyr-19 phosphorylated form) with MAPK1 (phosphorylated form); the interaction, promoted by insulin, leads to nuclear location and MAPK1 activation. Interacts with STAT3; the interaction is increased on insulin-induced tyrosine phosphorylation leading to STAT activation. In terms of processing, phosphorylated on serine and tyrosine residues. CAV1 promotes phosphorylation on Ser-23 which then targets the complex to the plasma membrane, lipid rafts and caveolae. Phosphorylation on Ser-36 appears to modulate mitosis in endothelial cells. Phosphorylation on both Tyr-19 and Tyr-27 is required for insulin-induced 'Ser-727' phosphorylation of STAT3 and its activation. Phosphorylation on Tyr-19 is required for insulin-induced phosphorylation of MAPK1 and DNA binding of STAT3. Tyrosine phosphorylation is induced by both EGF and insulin (By. similarity).

The protein localises to the nucleus. Its subcellular location is the cytoplasm. It is found in the golgi apparatus membrane. The protein resides in the cell membrane. It localises to the membrane. The protein localises to the caveola. Functionally, may act as a scaffolding protein within caveolar membranes. Interacts directly with G-protein alpha subunits and can functionally regulate their activity. Acts as an accessory protein in conjunction with CAV1 in targeting to lipid rafts and driving caveolae formation. The Ser-36 phosphorylated form has a role in modulating mitosis in endothelial cells. Positive regulator of cellular mitogenesis of the MAPK signaling pathway. Required for the insulin-stimulated nuclear translocation and activation of MAPK1 and STAT3, and the subsequent regulation of cell cycle progression. This is Caveolin-2 (CAV2) from Saimiri boliviensis boliviensis (Bolivian squirrel monkey).